We begin with the raw amino-acid sequence, 441 residues long: Dihydroorotase (441 aa).

Residues His-77 and His-79 each coordinate Zn(2+). Substrate-binding positions include 79–81 and Asn-111; that span reads HFR. Positions 167, 194, and 248 each coordinate Zn(2+). Asn-294 lines the substrate pocket. Zn(2+) is bound at residue Asp-321. Residue Asp-321 is part of the active site. Residues His-325 and 339-340 contribute to the substrate site; that span reads FG.

The protein belongs to the metallo-dependent hydrolases superfamily. DHOase family. Class I DHOase subfamily. The cofactor is Zn(2+).

It carries out the reaction (S)-dihydroorotate + H2O = N-carbamoyl-L-aspartate + H(+). It functions in the pathway pyrimidine metabolism; UMP biosynthesis via de novo pathway; (S)-dihydroorotate from bicarbonate: step 3/3. Its function is as follows. Catalyzes the reversible cyclization of carbamoyl aspartate to dihydroorotate. The chain is Dihydroorotase from Wolbachia sp. subsp. Drosophila simulans (strain wRi).